The chain runs to 749 residues: DNA topoisomerase 1 (749 aa).

The segment at 1–110 (MSDSEDVALS…PKKEDSVETD (110 aa)) is disordered. Positions 62 to 75 (LSKEKVNNKVKDEL) are enriched in basic and acidic residues. Positions 79–94 (PVTPKKTPKISKTPVS) are enriched in low complexity. Over residues 101 to 110 (PKKEDSVETD) the composition is skewed to basic and acidic residues. Interaction with DNA stretches follow at residues 338–339 (KY), 401–406 (RAGGEK), and 493–495 (TAK). The 405-residue stretch at 345 to 749 (NSSIKGISDM…IESTDENWRF (405 aa)) folds into the Topo IB-type catalytic domain. Catalysis depends on Y707, which acts as the O-(3'-phospho-DNA)-tyrosine intermediate.

The protein belongs to the type IB topoisomerase family.

Its subcellular location is the nucleus. The protein localises to the nucleolus. It localises to the nucleoplasm. It catalyses the reaction ATP-independent breakage of single-stranded DNA, followed by passage and rejoining.. Releases the supercoiling and torsional tension of DNA introduced during the DNA replication and transcription by transiently cleaving and rejoining one strand of the DNA duplex. Introduces a single-strand break via transesterification at the specific target site 5'-[CT]CCTTp site in duplex DNA. The scissile phosphodiester is attacked by the catalytic tyrosine of the enzyme, resulting in the formation of a DNA-(3'-phosphotyrosyl)-enzyme intermediate and the expulsion of a 5'-OH DNA strand. The free DNA strand then undergoes passage around the unbroken strand thus removing DNA supercoils. Finally, in the religation step, the DNA 5'-OH attacks the covalent intermediate to expel the active-site tyrosine and restore the DNA phosphodiester backbone. The protein is DNA topoisomerase 1 (TOP1) of Candidozyma auris (Yeast).